The following is a 1020-amino-acid chain: Non-canonical nonribosomal peptide synthetase hkm10 (1020 aa).

The adenylation (A) domain stretch occupies residues 21-419 (QMLEDPDAIA…GRFDHQVKIR (399 aa)). The Carrier domain maps to 526–608 (QDKVPSEGAS…QLAHIVDRNQ (83 aa)). S568 bears the O-(pantetheine 4'-phosphoryl)serine mark. Residues 652 to 894 (LTGATGFVGA…FVPIDYVTST (243 aa)) form a short-chain dehydrogenase/reductase (R) domain region.

The protein belongs to the NRP synthetase family.

It participates in secondary metabolite biosynthesis. In terms of biological role, non-canonical nonribosomal peptide synthetase; part of the gene cluster that mediates the biosynthesis of hancockiamides, an unusual new family of N-cinnamoylated piperazines. The NRPS hkm10 and the NmrA-like reductase hkm9 are proposed to convert two molecules of L-Phe to the intermediary piperazine called xenocockiamide A. Xenocockiamide A is then converted to hancockiamide D via a series of hydroxylations and O-methylations. The tyrosinase hkm6 may catalyze an aromatic hydroxylation, then the 2-oxoglutarate-dependent Fe(II) dioxygenase hkm4 and the FAD-dependent phenol hydroxylase hkm7 may catalyze consecutive hydroxylations to install 2 more hydroxy groups, and the methyltransferase hkm8 probably catalyzes two methylations using 2 molecules of S-adenosyl-L-methionine (SAM). The NRPS hkm11 activates and transfers trans-cinnamate supplied by the PAL hkm12 to hancockiamide D and produces hancockiamide A. NRPS Hkm11 has the flexibility to tolerate the bulky hancockiamide G as a substrate and the absence of the acetyl-transferase hkm3 opens up the opportunity for hkm11 to introduce a second N-cinnamoyl moiety. The cytochrome P450 monooxygenase hkm5 catalyzes the methylenedioxy bridge formation, converting hancockiamide A into hancockiamide G. Hkm5 can also convert hancockiamide B into hancockiamide C, and hancockiamide D into hancockiamide H. The N-acetyltransferase hkm3 finally transfers an acetyl group to 1-N of piperazine, converting hancockiamide A into hancockiamide B and hancockiamide G into hancockiamide C. The sequence is that of Non-canonical nonribosomal peptide synthetase hkm10 from Aspergillus hancockii.